The primary structure comprises 95 residues: Defensin alpha 4 (95 aa).

A signal peptide spans methionine 1–alanine 19. Residues glutamate 20 to glycine 62 constitute a propeptide that is removed on maturation. Intrachain disulfides connect cysteine 65–cysteine 93, cysteine 67–cysteine 82, and cysteine 72–cysteine 92.

Belongs to the alpha-defensin family.

It localises to the secreted. Host-defense peptide that has antimicrobial activity. Inhibits corticotropin (ACTH)-stimulated corticosterone production (in vitro). The sequence is that of Defensin alpha 4 from Oryctolagus cuniculus (Rabbit).